Reading from the N-terminus, the 517-residue chain is Ubiquitin carboxyl-terminal hydrolase 30 (517 aa).

Residues 1-35 (MLSSRAEAAMTAADRAIQRFLRTGAAVRYKVMKNW) lie on the Mitochondrial intermembrane side of the membrane. Residues 36 to 56 (GVIGGIAAALAAGIYVIWGPI) traverse the membrane as a helical segment. The Cytoplasmic portion of the chain corresponds to 57–517 (TERKKRRKGL…HQSQECKSEE (461 aa)). A USP domain is found at 68 to 502 (PGLVNLGNTC…SAYLLFYERV (435 aa)). Cys-77 acts as the Nucleophile in catalysis. Glycyl lysine isopeptide (Lys-Gly) (interchain with G-Cter in ubiquitin) cross-links involve residues Lys-235 and Lys-289. The disordered stretch occupies residues 364 to 395 (SQHNPKLNKNPGPTLELQDGPGAPTPVLNQPG). The active-site Proton acceptor is His-452.

This sequence belongs to the peptidase C19 family. Post-translationally, ubiquitinated by parkin (PRKN) at Lys-235 and Lys-289, leading to its degradation. As to expression, expressed in skeletal muscle, pancreas, liver and kidney.

The protein localises to the mitochondrion outer membrane. The enzyme catalyses Thiol-dependent hydrolysis of ester, thioester, amide, peptide and isopeptide bonds formed by the C-terminal Gly of ubiquitin (a 76-residue protein attached to proteins as an intracellular targeting signal).. Inhibited by the diterpenoid derivative 15-oxospiramilactone (S3). Functionally, deubiquitinating enzyme tethered to the mitochondrial outer membrane that acts as a key inhibitor of mitophagy by counteracting the action of parkin (PRKN): hydrolyzes ubiquitin attached by parkin on target proteins, such as RHOT1/MIRO1 and TOMM20, thereby blocking parkin's ability to drive mitophagy. Preferentially cleaves 'Lys-6'- and 'Lys-11'-linked polyubiquitin chains, 2 types of linkage that participate in mitophagic signaling. Does not cleave efficiently polyubiquitin phosphorylated at 'Ser-65'. Acts as a negative regulator of mitochondrial fusion by mediating deubiquitination of MFN1 and MFN2. This chain is Ubiquitin carboxyl-terminal hydrolase 30, found in Homo sapiens (Human).